The sequence spans 442 residues: Zuotin (442 aa).

The tract at residues 49–84 is disordered; sequence RQRHGRTFSEDERLEVKNKVQEEVKEESEDEEEDPA. Thr55 is subject to Phosphothreonine. Residues 55–71 show a composition bias toward basic and acidic residues; the sequence is TFSEDERLEVKNKVQEE. Residues Ser57 and Ser76 each carry the phosphoserine modification. A compositionally biased stretch (acidic residues) spans 72–83; sequence VKEESEDEEEDP. Residues 97–167 enclose the J domain; sequence DHYAVLGLSK…VRRRQFDSVD (71 aa). 2 disordered regions span residues 242-270 and 306-331; these read DGESRDNKRFQEKKNRSERQKNKARDNAR and GAREAAAAAQKKKEEEERRAAEEAAA. The segment covering 316 to 330 has biased composition (basic and acidic residues); the sequence is KKKEEEERRAAEEAA.

In terms of assembly, RAC is a heterodimer of the Hsp70/DnaK-type chaperone ssz1 and the Hsp40/DnaJ-type chaperone zuo1. RAC associates with ribosomes via zuo1.

The protein localises to the cytoplasm. Its function is as follows. Component of the ribosome-associated complex (RAC), a heterodimeric chaperone complex involved in regulation of accurate translation termination and in folding or maintaining nascent polypeptides in a folding-competent state. RAC stimulates the ATPase activity of the ribosome-associated pool of Hsp70-type chaperones SSB1/SSB2 that bind to the nascent polypeptide chain. The protein is Zuotin (zuo1) of Schizosaccharomyces pombe (strain 972 / ATCC 24843) (Fission yeast).